The following is a 621-amino-acid chain: Chaperone protein HtpG (621 aa).

The segment at 1–341 (MSNQEYTFQT…SEDLPLNVSR (341 aa)) is a; substrate-binding. Residues 342–547 (EILQQNKILA…GDEQNAMMAN (206 aa)) are b. The c stretch occupies residues 548-621 (FMRQMGQSVP…RLNSVLLKAL (74 aa)).

This sequence belongs to the heat shock protein 90 family. Homodimer.

Its subcellular location is the cytoplasm. In terms of biological role, molecular chaperone. Has ATPase activity. The protein is Chaperone protein HtpG of Helicobacter pylori (strain HPAG1).